The following is a 341-amino-acid chain: S-adenosylmethionine:tRNA ribosyltransferase-isomerase (341 aa).

This sequence belongs to the QueA family. In terms of assembly, monomer.

It localises to the cytoplasm. It carries out the reaction 7-aminomethyl-7-carbaguanosine(34) in tRNA + S-adenosyl-L-methionine = epoxyqueuosine(34) in tRNA + adenine + L-methionine + 2 H(+). It participates in tRNA modification; tRNA-queuosine biosynthesis. Transfers and isomerizes the ribose moiety from AdoMet to the 7-aminomethyl group of 7-deazaguanine (preQ1-tRNA) to give epoxyqueuosine (oQ-tRNA). This Pelodictyon phaeoclathratiforme (strain DSM 5477 / BU-1) protein is S-adenosylmethionine:tRNA ribosyltransferase-isomerase.